The following is a 162-amino-acid chain: SsrA-binding protein (162 aa).

A disordered region spans residues 140–162 (EDRRHDIKERETKREMDRAMRRR).

Belongs to the SmpB family.

The protein localises to the cytoplasm. In terms of biological role, required for rescue of stalled ribosomes mediated by trans-translation. Binds to transfer-messenger RNA (tmRNA), required for stable association of tmRNA with ribosomes. tmRNA and SmpB together mimic tRNA shape, replacing the anticodon stem-loop with SmpB. tmRNA is encoded by the ssrA gene; the 2 termini fold to resemble tRNA(Ala) and it encodes a 'tag peptide', a short internal open reading frame. During trans-translation Ala-aminoacylated tmRNA acts like a tRNA, entering the A-site of stalled ribosomes, displacing the stalled mRNA. The ribosome then switches to translate the ORF on the tmRNA; the nascent peptide is terminated with the 'tag peptide' encoded by the tmRNA and targeted for degradation. The ribosome is freed to recommence translation, which seems to be the essential function of trans-translation. In Myxococcus xanthus (strain DK1622), this protein is SsrA-binding protein.